We begin with the raw amino-acid sequence, 997 residues long: FHIP family protein CPIJ015043 (997 aa).

Disordered stretches follow at residues 558–579 (DHRS…QQLQ) and 759–922 (NVVL…GGAA). A compositionally biased stretch (low complexity) spans 569–579 (QQHLHQQQQLQ). The segment covering 763–780 (GGSGPGGPRLSNGGGGTG) has biased composition (gly residues). Composition is skewed to low complexity over residues 781–792 (SSITSSLSQTTP) and 830–889 (GSNS…MVGS). The segment covering 911-922 (IGSGTVGGGGAA) has biased composition (gly residues).

The protein belongs to the FHIP family.

The chain is FHIP family protein CPIJ015043 from Culex quinquefasciatus (Southern house mosquito).